Reading from the N-terminus, the 288-residue chain is Glycine--tRNA ligase alpha subunit (288 aa).

Belongs to the class-II aminoacyl-tRNA synthetase family. In terms of assembly, tetramer of two alpha and two beta subunits.

It is found in the cytoplasm. It carries out the reaction tRNA(Gly) + glycine + ATP = glycyl-tRNA(Gly) + AMP + diphosphate. The polypeptide is Glycine--tRNA ligase alpha subunit (Desulfatibacillum aliphaticivorans).